A 308-amino-acid polypeptide reads, in one-letter code: MDSGGRIVYALNVEKTGFLRILSVTVLQRLYRRVFWFLFKCVAGIDVPRHAGSLAVFSFFFLSILYSISSGGYMNHFMKVAISNSGFLVTHVDMSGNKRMMEQDILKVLGLDEYPSMISFDIDKARFILEQQPWVRLADVQKIYPDRLRISLVEREPYAIWQHNGEMNIIDDTGYVIAPFQAGLVQNLSFVVGQGAQKTAKLFIQALSVYPQLQNHVRAYVRVGDRRWDLFLANGMRIMLPENGAIERLASFIEQGVAEDLFSRDISDIDLRLSDRITVSLSDEALTRRRAVVLEEERLLKMLKAGSV.

The Cytoplasmic portion of the chain corresponds to 1 to 53; the sequence is MDSGGRIVYALNVEKTGFLRILSVTVLQRLYRRVFWFLFKCVAGIDVPRHAGS. Residues 54–74 traverse the membrane as a helical segment; the sequence is LAVFSFFFLSILYSISSGGYM. Residues 75-308 lie on the Periplasmic side of the membrane; that stretch reads NHFMKVAISN…LLKMLKAGSV (234 aa). Positions 87–155 constitute a POTRA domain; that stretch reads FLVTHVDMSG…DRLRISLVER (69 aa).

This sequence belongs to the FtsQ/DivIB family. FtsQ subfamily.

The protein resides in the cell inner membrane. Functionally, essential cell division protein. In Bartonella bacilliformis, this protein is Cell division protein FtsQ.